The primary structure comprises 631 residues: tRNA uridine 5-carboxymethylaminomethyl modification enzyme MnmG (631 aa).

FAD is bound at residue 15-20 (GAGHAG). A disordered region spans residues 214 to 233 (YSKTEEEPGDKEPRHFSFTS). 276–290 (GPRYCPSIETKVVRF) serves as a coordination point for NAD(+).

It belongs to the MnmG family. Homodimer. Heterotetramer of two MnmE and two MnmG subunits. It depends on FAD as a cofactor.

It localises to the cytoplasm. In terms of biological role, NAD-binding protein involved in the addition of a carboxymethylaminomethyl (cmnm) group at the wobble position (U34) of certain tRNAs, forming tRNA-cmnm(5)s(2)U34. The polypeptide is tRNA uridine 5-carboxymethylaminomethyl modification enzyme MnmG (Lactobacillus delbrueckii subsp. bulgaricus (strain ATCC 11842 / DSM 20081 / BCRC 10696 / JCM 1002 / NBRC 13953 / NCIMB 11778 / NCTC 12712 / WDCM 00102 / Lb 14)).